The chain runs to 71 residues: Beta-defensin 25 (71 aa).

Residues 1–22 (MAKWILLIVALLVLSHVPPGST) form the signal peptide. 3 disulfides stabilise this stretch: Cys-27–Cys-54, Cys-34–Cys-48, and Cys-38–Cys-55.

The protein belongs to the beta-defensin family.

It is found in the secreted. In terms of biological role, has antibacterial activity. The chain is Beta-defensin 25 (Defb25) from Mus musculus (Mouse).